We begin with the raw amino-acid sequence, 297 residues long: Glycine--tRNA ligase alpha subunit (297 aa).

Belongs to the class-II aminoacyl-tRNA synthetase family. Tetramer of two alpha and two beta subunits.

It localises to the cytoplasm. It catalyses the reaction tRNA(Gly) + glycine + ATP = glycyl-tRNA(Gly) + AMP + diphosphate. In Halalkalibacterium halodurans (strain ATCC BAA-125 / DSM 18197 / FERM 7344 / JCM 9153 / C-125) (Bacillus halodurans), this protein is Glycine--tRNA ligase alpha subunit (glyQ).